A 309-amino-acid polypeptide reads, in one-letter code: Low density lipoprotein receptor adapter protein 1-A (309 aa).

Residues Leu41 to Gln195 form the PID domain. Positions Glu179–Ser199 are disordered. Residues Leu213–Glu217 carry the Clathrin box motif. Residues Trp250–Leu277 form an AP-2 complex binding region. A [DE]-X(1,2)-F-X-X-[FL]-X-X-X-R motif motif is present at residues Glu258–Arg267.

Interacts (via PID domain) with ldlr (via NPXY motif). Binds to soluble clathrin trimers and to the adapter protein complex 2 (AP-2, beta 2 subunit). Binds to phosphoinositides, which regulate clathrin bud assembly at the cell surface. Interacts with the VLDL receptor (vldlr). Interacts with the vitellogenin receptor. Expressed at high level during oogenesis and embryogenesis. Found in the oocyte vegetal cortex. Found at low level in the adult liver and spleen. Found at very low level in testis and heart.

It localises to the cytoplasm. Functionally, adapter protein (clathrin-associated sorting protein (CLASP)) required for efficient endocytosis of the LDL receptor (LDLR). Also involved in the vitellogenin receptor mediated endocytosis of nutrients during oogenesis. This is Low density lipoprotein receptor adapter protein 1-A from Xenopus laevis (African clawed frog).